A 265-amino-acid polypeptide reads, in one-letter code: Thiazole synthase (265 aa).

Lysine 103 (schiff-base intermediate with DXP) is an active-site residue. 1-deoxy-D-xylulose 5-phosphate is bound by residues glycine 164, 190–191, and 212–213; these read AG and NT.

Belongs to the ThiG family. In terms of assembly, homotetramer. Forms heterodimers with either ThiH or ThiS.

The protein localises to the cytoplasm. It carries out the reaction [ThiS sulfur-carrier protein]-C-terminal-Gly-aminoethanethioate + 2-iminoacetate + 1-deoxy-D-xylulose 5-phosphate = [ThiS sulfur-carrier protein]-C-terminal Gly-Gly + 2-[(2R,5Z)-2-carboxy-4-methylthiazol-5(2H)-ylidene]ethyl phosphate + 2 H2O + H(+). It functions in the pathway cofactor biosynthesis; thiamine diphosphate biosynthesis. Its function is as follows. Catalyzes the rearrangement of 1-deoxy-D-xylulose 5-phosphate (DXP) to produce the thiazole phosphate moiety of thiamine. Sulfur is provided by the thiocarboxylate moiety of the carrier protein ThiS. In vitro, sulfur can be provided by H(2)S. This Bordetella pertussis (strain Tohama I / ATCC BAA-589 / NCTC 13251) protein is Thiazole synthase.